We begin with the raw amino-acid sequence, 525 residues long: Putative ribose/galactose/methyl galactoside import ATP-binding protein (525 aa).

Positions 1-30 are disordered; that stretch reads MFGSATANPPAQRDLPSSDSDSPTPDAQPP. The span at 14 to 25 shows a compositional bias: low complexity; the sequence is DLPSSDSDSPTP. ABC transporter domains are found at residues 33–269 and 279–523; these read LEIS…VGRE and KPPG…SGHK. 65-72 serves as a coordination point for ATP; that stretch reads GENGAGKS.

Belongs to the ABC transporter superfamily. Carbohydrate importer 2 (CUT2) (TC 3.A.1.2) family.

It localises to the cell inner membrane. The enzyme catalyses D-ribose(out) + ATP + H2O = D-ribose(in) + ADP + phosphate + H(+). The catalysed reaction is D-galactose(out) + ATP + H2O = D-galactose(in) + ADP + phosphate + H(+). In terms of biological role, part of an ABC transporter complex involved in carbohydrate import. Could be involved in ribose, galactose and/or methyl galactoside import. Responsible for energy coupling to the transport system. This chain is Putative ribose/galactose/methyl galactoside import ATP-binding protein, found in Pseudomonas savastanoi pv. phaseolicola (strain 1448A / Race 6) (Pseudomonas syringae pv. phaseolicola (strain 1448A / Race 6)).